Here is a 129-residue protein sequence, read N- to C-terminus: D-ribose pyranase 1 (129 aa).

His-20 functions as the Proton donor in the catalytic mechanism. Residues Asp-28, His-96, and 118–120 each bind substrate; that span reads YSN.

It belongs to the RbsD / FucU family. RbsD subfamily. In terms of assembly, homodecamer.

Its subcellular location is the cytoplasm. It catalyses the reaction beta-D-ribopyranose = beta-D-ribofuranose. Its pathway is carbohydrate metabolism; D-ribose degradation; D-ribose 5-phosphate from beta-D-ribopyranose: step 1/2. Its function is as follows. Catalyzes the interconversion of beta-pyran and beta-furan forms of D-ribose. The sequence is that of D-ribose pyranase 1 from Rubrobacter xylanophilus (strain DSM 9941 / JCM 11954 / NBRC 16129 / PRD-1).